The chain runs to 124 residues: Small ribosomal subunit protein uS12 (124 aa).

The residue at position 89 (D89) is a 3-methylthioaspartic acid.

This sequence belongs to the universal ribosomal protein uS12 family. Part of the 30S ribosomal subunit. Contacts proteins S8 and S17. May interact with IF1 in the 30S initiation complex.

In terms of biological role, with S4 and S5 plays an important role in translational accuracy. Functionally, interacts with and stabilizes bases of the 16S rRNA that are involved in tRNA selection in the A site and with the mRNA backbone. Located at the interface of the 30S and 50S subunits, it traverses the body of the 30S subunit contacting proteins on the other side and probably holding the rRNA structure together. The combined cluster of proteins S8, S12 and S17 appears to hold together the shoulder and platform of the 30S subunit. The polypeptide is Small ribosomal subunit protein uS12 (Blochmanniella floridana).